Here is a 284-residue protein sequence, read N- to C-terminus: GPN-loop GTPase 3 (284 aa).

13–18 provides a ligand contact to GTP; it reads GSGKST. Residues 72–74 carry the Gly-Pro-Asn (GPN)-loop; involved in dimer interface motif; sequence GPN. GTP is bound at residue 174 to 177; the sequence is TKMD. The segment at 261–284 is disordered; it reads KEPKEHEDESSSMFDEYFQEHQNE.

Belongs to the GPN-loop GTPase family. In terms of assembly, heterodimer with GPN1. Binds to RNA polymerase II (RNAPII). Interacts directly with subunits RPB4 and RPB7 and the CTD of RPB1.

Small GTPase required for proper localization of RNA polymerase II (RNAPII). May act at an RNAP assembly step prior to nuclear import. This Bos taurus (Bovine) protein is GPN-loop GTPase 3.